We begin with the raw amino-acid sequence, 202 residues long: Imidazoleglycerol-phosphate dehydratase (202 aa).

This sequence belongs to the imidazoleglycerol-phosphate dehydratase family. In terms of assembly, homotrimer.

It catalyses the reaction D-erythro-1-(imidazol-4-yl)glycerol 3-phosphate = 3-(imidazol-4-yl)-2-oxopropyl phosphate + H2O. It participates in amino-acid biosynthesis; L-histidine biosynthesis; L-histidine from 5-phospho-alpha-D-ribose 1-diphosphate: step 6/9. The protein is Imidazoleglycerol-phosphate dehydratase (HIS3) of Cryptococcus neoformans var. neoformans serotype D (strain B-3501A) (Filobasidiella neoformans).